A 502-amino-acid chain; its full sequence is Cyanidin 3-O-glucoside 5-O-glucosyltransferase (acyl-glucose) (502 aa).

The first 30 residues, Met1–Phe30, serve as a signal peptide directing secretion. N-linked (GlcNAc...) asparagine glycosylation occurs at Asn2. A beta-D-glucoside contacts are provided by residues Gln52, His150, and Asn196–Glu197. Glu197 acts as the Proton donor in catalysis. N-linked (GlcNAc...) asparagine glycosylation is present at Asn303. Residues Tyr320 and Glu388 each contribute to the a beta-D-glucoside site. The Nucleophile role is filled by Glu388. Asn425 carries an N-linked (GlcNAc...) asparagine glycan. A beta-D-glucoside contacts are provided by Trp435 and Phe451.

This sequence belongs to the glycosyl hydrolase 1 family. As to expression, expressed in petals.

Its subcellular location is the vacuole. It catalyses the reaction cyanidin 3-O-beta-D-glucoside + 1-O-(trans-sinapoyl)-beta-D-glucose = cyanidin 3,5-di-O-beta-D-glucoside + (E)-sinapate. It functions in the pathway pigment biosynthesis; anthocyanin biosynthesis. In terms of biological role, beta-glycosidase that catalyzes the transfer of glucose moiety to anthocyanidin 3-glucoside at the 5 position. Anthocyanins are ubiquitous colored pigments that are responsible for variations in petal color. Uses acyl-glucoses, but not UDP-glucose, as the glucose donor. This Dianthus caryophyllus (Carnation) protein is Cyanidin 3-O-glucoside 5-O-glucosyltransferase (acyl-glucose) (AA5GT).